The following is a 544-amino-acid chain: CTP synthase (544 aa).

An amidoligase domain region spans residues 1–267 (MSKFIFVTGG…GDLLVSRLHL (267 aa)). S13 lines the CTP pocket. S13 provides a ligand contact to UTP. An ATP-binding site is contributed by 14 to 19 (SVGKGI). Position 54 (Y54) interacts with L-glutamine. D71 contacts ATP. 2 residues coordinate Mg(2+): D71 and E141. CTP is bound by residues 148-150 (DIE), 188-193 (KTKPTQ), and K224. UTP-binding positions include 188 to 193 (KTKPTQ) and K224. Residues 299 to 534 (YVELKDAYYS…INAAKKVIRD (236 aa)) enclose the Glutamine amidotransferase type-1 domain. G354 is a binding site for L-glutamine. The Nucleophile; for glutamine hydrolysis role is filled by C381. L-glutamine-binding positions include 382 to 385 (LGMQ), E405, and R462. Catalysis depends on residues H507 and E509.

Belongs to the CTP synthase family. As to quaternary structure, homotetramer.

It catalyses the reaction UTP + L-glutamine + ATP + H2O = CTP + L-glutamate + ADP + phosphate + 2 H(+). The enzyme catalyses L-glutamine + H2O = L-glutamate + NH4(+). The catalysed reaction is UTP + NH4(+) + ATP = CTP + ADP + phosphate + 2 H(+). It participates in pyrimidine metabolism; CTP biosynthesis via de novo pathway; CTP from UDP: step 2/2. With respect to regulation, allosterically activated by GTP, when glutamine is the substrate; GTP has no effect on the reaction when ammonia is the substrate. The allosteric effector GTP functions by stabilizing the protein conformation that binds the tetrahedral intermediate(s) formed during glutamine hydrolysis. Inhibited by the product CTP, via allosteric rather than competitive inhibition. Functionally, catalyzes the ATP-dependent amination of UTP to CTP with either L-glutamine or ammonia as the source of nitrogen. Regulates intracellular CTP levels through interactions with the four ribonucleotide triphosphates. This is CTP synthase from Dehalococcoides mccartyi (strain ATCC BAA-2100 / JCM 16839 / KCTC 5957 / BAV1).